The sequence spans 1769 residues: U3 small nucleolar RNA-associated protein 10 (1769 aa).

N-acetylserine is present on Ser-2. Residues Leu-1729–Tyr-1767 form an HEAT repeat.

Belongs to the HEATR1/UTP10 family. In terms of assembly, interacts with snoRNA U3. Interacts with MPP10. Component of the ribosomal small subunit (SSU) processome composed of at least 40 protein subunits and snoRNA U3. In the absence of snoRNA3, forms a complex with other t-UTPs. This complex can associate with pre-18S ribosomal RNAs.

It localises to the nucleus. The protein localises to the nucleolus. The protein resides in the mitochondrion. Functionally, involved in nucleolar processing of pre-18S ribosomal RNA. Required for optimal pre-ribosomal RNA transcription by RNA polymerase I together with a subset of U3 proteins required for transcription (t-UTPs). Involved in ribosome biosynthesis. In Saccharomyces cerevisiae (strain ATCC 204508 / S288c) (Baker's yeast), this protein is U3 small nucleolar RNA-associated protein 10 (UTP10).